The sequence spans 474 residues: Gamma-aminobutyric acid receptor subunit beta-1 (474 aa).

A signal peptide spans 1 to 25 (MWTVQNRESLGLLSFPVMVAMVCCA). The Extracellular portion of the chain corresponds to 26-245 (HSSNEPSNMS…SFRLKRNIGY (220 aa)). Residues Asn-33 and Asn-105 are each glycosylated (N-linked (GlcNAc...) asparagine). Position 122 (Tyr-122) interacts with histamine. Cys-161 and Cys-175 are disulfide-bonded. N-linked (GlcNAc...) asparagine glycosylation occurs at Asn-174. Histamine-binding positions include 181-182 (SY) and Thr-227. 4-aminobutanoate-binding residues include Tyr-182 and Thr-227. 3 consecutive transmembrane segments (helical) span residues 246–267 (FILQ…SFWI), 271–293 (ASAA…STHL), and 305–327 (AIDI…YAFV). Topologically, residues 328–451 (NYIFFGKGPQ…DLTDVNSIDK (124 aa)) are cytoplasmic. Residues 452 to 473 (WSRMFFPITFSLFNVVYWLYYV) traverse the membrane as a helical segment.

Belongs to the ligand-gated ion channel (TC 1.A.9) family. Gamma-aminobutyric acid receptor (TC 1.A.9.5) subfamily. GABRB1 sub-subfamily. Heteropentamer, formed by a combination of alpha (GABRA1-6), beta (GABRB1-3), gamma (GABRG1-3), delta (GABRD), epsilon (GABRE), rho (GABRR1-3), pi (GABRP) and theta (GABRQ) chains, each subunit exhibiting distinct physiological and pharmacological properties. Binds UBQLN1.

The protein localises to the postsynaptic cell membrane. The protein resides in the cell membrane. The catalysed reaction is chloride(in) = chloride(out). With respect to regulation, potentiated by histamine. Its function is as follows. Beta subunit of the heteropentameric ligand-gated chloride channel gated by gamma-aminobutyric acid (GABA), a major inhibitory neurotransmitter in the brain. GABA-gated chloride channels, also named GABA(A) receptors (GABAAR), consist of five subunits arranged around a central pore and contain GABA active binding site(s) located at the alpha and beta subunit interface(s). When activated by GABA, GABAARs selectively allow the flow of chloride anions across the cell membrane down their electrochemical gradient. Chloride influx into the postsynaptic neuron following GABAAR opening decreases the neuron ability to generate a new action potential, thereby reducing nerve transmission. Beta-containing GABAARs can simultaneously bind GABA and histamine where histamine binds at the interface of two neighboring beta subunits, which may be involved in the regulation of sleep and wakefulness. The sequence is that of Gamma-aminobutyric acid receptor subunit beta-1 from Mus musculus (Mouse).